The primary structure comprises 141 residues: Large-conductance mechanosensitive channel (141 aa).

Transmembrane regions (helical) follow at residues 17–37, 40–60, and 86–106; these read MDLA…ASIV, LIMP…LFIA, and GNFV…FIIV.

This sequence belongs to the MscL family. As to quaternary structure, homopentamer.

It is found in the cell inner membrane. Channel that opens in response to stretch forces in the membrane lipid bilayer. May participate in the regulation of osmotic pressure changes within the cell. This Thiobacillus denitrificans (strain ATCC 25259 / T1) protein is Large-conductance mechanosensitive channel.